Reading from the N-terminus, the 43-residue chain is Bacteriocin leucocin-C (43 aa).

Cys9 and Cys14 form a disulfide bridge.

It is found in the secreted. Inhibits a wide spectrum of lactic acid bacteria. The chain is Bacteriocin leucocin-C from Leuconostoc mesenteroides.